We begin with the raw amino-acid sequence, 251 residues long: Transcription factor bHLH144 (251 aa).

Disordered stretches follow at residues 1–20 (MQNN…NMHN), 130–161 (YEEN…YGNT), and 173–202 (NNNN…RKKM). Positions 9–18 (FSDEVGDRNM) are enriched in basic and acidic residues. The span at 130-147 (YEENDDNEGEEDGGDSEE) shows a compositional bias: acidic residues. The segment covering 148–161 (VSTARTSSRDYGNT) has biased composition (polar residues). Residues 173 to 192 (NNNNNNNSRKQSLSGSASSS) show a composition bias toward low complexity. Residues 186–235 (SGSASSSNNDGKGRKKMKKMMGVLRRIVPGGEQMNTACVLDEAVQYLKSL) enclose the bHLH domain.

In terms of assembly, homodimer. Interacts with LHW.

It is found in the nucleus. This Arabidopsis thaliana (Mouse-ear cress) protein is Transcription factor bHLH144 (BHLH144).